Here is a 343-residue protein sequence, read N- to C-terminus: Thiamine thiazole synthase 4, chloroplastic (343 aa).

Residues A89, 109–110, G117, and A182 each bind substrate; that span reads EQ. C211 is subject to 2,3-didehydroalanine (Cys). Substrate is bound by residues D213, H228, M280, and 290–292; that span reads RMG.

This sequence belongs to the THI4 family. As to quaternary structure, homooctamer. The cofactor is Fe cation. In terms of processing, during the catalytic reaction, a sulfide is transferred from Cys-211 to a reaction intermediate, generating a dehydroalanine residue.

It is found in the plastid. The protein localises to the chloroplast. The enzyme catalyses [ADP-thiazole synthase]-L-cysteine + glycine + NAD(+) = [ADP-thiazole synthase]-dehydroalanine + ADP-5-ethyl-4-methylthiazole-2-carboxylate + nicotinamide + 3 H2O + 2 H(+). Involved in biosynthesis of the thiamine precursor thiazole. Catalyzes the conversion of NAD and glycine to adenosine diphosphate 5-(2-hydroxyethyl)-4-methylthiazole-2-carboxylic acid (ADT), an adenylated thiazole intermediate. The reaction includes an iron-dependent sulfide transfer from a conserved cysteine residue of the protein to a thiazole intermediate. The enzyme can only undergo a single turnover, which suggests it is a suicide enzyme. May have additional roles in adaptation to various stress conditions and in DNA damage tolerance. The sequence is that of Thiamine thiazole synthase 4, chloroplastic from Physcomitrium patens (Spreading-leaved earth moss).